The following is a 273-amino-acid chain: Probable NAD(P)H dehydrogenase (quinone) FQR1-like 2 (273 aa).

A disordered region spans residues Met1–Pro60. Low complexity predominate over residues Thr49–Pro60. One can recognise a Flavodoxin-like domain in the interval Ile75–Met263. Residues Ser81–His85, Phe183–Gly236, and His207 each bind FMN. An NAD(+)-binding site is contributed by Tyr83.

The protein belongs to the WrbA family. It depends on FMN as a cofactor.

It localises to the cell membrane. It carries out the reaction a quinone + NADH + H(+) = a quinol + NAD(+). The enzyme catalyses a quinone + NADPH + H(+) = a quinol + NADP(+). Its function is as follows. Catalyzes the transfer of electrons from NADH and NADPH to reduce quinone to the hydroquinone state. In Arabidopsis thaliana (Mouse-ear cress), this protein is Probable NAD(P)H dehydrogenase (quinone) FQR1-like 2.